A 76-amino-acid chain; its full sequence is UPF0291 protein MW2494 (76 aa).

Belongs to the UPF0291 family.

It is found in the cytoplasm. This chain is UPF0291 protein MW2494, found in Staphylococcus aureus (strain MW2).